We begin with the raw amino-acid sequence, 280 residues long: Cycloeucalenol cycloisomerase (280 aa).

6 helical membrane passes run 22–42, 53–73, 89–109, 167–187, 201–221, and 244–264; these read LFFL…VVPY, YLLL…LLVG, ANLW…HYFF, FEAA…TIAI, MYRV…PMFF, and AMLV…IVPL.

It localises to the membrane. The enzyme catalyses cycloeucalenol = obtusifoliol. Converts pentacyclic cyclopropyl sterols to tetracyclic sterols. The sequence is that of Cycloeucalenol cycloisomerase (CPI1) from Arabidopsis thaliana (Mouse-ear cress).